Consider the following 148-residue polypeptide: Nucleoside diphosphate kinase (148 aa).

Residues K9, F57, R85, T91, R102, and N112 each coordinate ATP. At T91 the chain carries Phosphothreonine. Residue H115 is the Pros-phosphohistidine intermediate of the active site. Phosphoserine is present on S122.

It belongs to the NDK family. As to quaternary structure, homotetramer. Mg(2+) serves as cofactor.

It localises to the cytoplasm. The catalysed reaction is a 2'-deoxyribonucleoside 5'-diphosphate + ATP = a 2'-deoxyribonucleoside 5'-triphosphate + ADP. The enzyme catalyses a ribonucleoside 5'-diphosphate + ATP = a ribonucleoside 5'-triphosphate + ADP. Its function is as follows. Major role in the synthesis of nucleoside triphosphates other than ATP. The ATP gamma phosphate is transferred to the NDP beta phosphate via a ping-pong mechanism, using a phosphorylated active-site intermediate. The sequence is that of Nucleoside diphosphate kinase from Bacillus anthracis.